We begin with the raw amino-acid sequence, 812 residues long: MTGIEQKTPVGGSETGGADGLYAVLPLRDIVVFPHMIVPLFVGREKSIRALEEVMGVDKQILLATQKNAADDDPAPDAIYEIGTIANVLQLLKLPDGTVKVLVEGTARAKISKFTDREDYHEAYAAALQEPEEDAVEIEALARSVVPDFENYVKLNKKISPEVVGAASQIDDYSKLADTVASHLAIKIPEKQEMLSVLSVRERLEKALSFMEAEISVLQVEKRIRSRVKRQMEKTQREYYLNEQMKAIQKELGDSEDGRDEVAEIEERITKTKLSKEAREKALAELKKLRSMSPMSAEATVVRNYLDWLLSIPWGKKSKVKQDLNFAQEVLDAEHFGLGKVKERIVEYLAVQARSTKIKGPILCLVGPPGVGKTSLARSIAKATGREYVRMSLGGVRDEAEIRGHRRTYIGSMPGKVIQSMKKAKKSNPLFLLDEIDKMGQDFRGDPSSAMLEVLDPEQNATFMDHYLEVEYDLSNVMFVTTANTMNIPVPLLDRMEIIRIAGYTEDEKLEIAKRHLLPKAIKDHALQPKEFSVTEDALRNVIRHYTREAGVRSLEREVMTLARKAVTEILKTKKKSVKITDKNLSDYLGVEKFRFGQIDGEDQVGVVTGLAWTEVGGELLTIEGVMMPGKGRMTVTGNLRDVMKESISAAASYVRSRAIDFGIEPPLFDKRDIHVHVPEGATPKDGPSAGIAMVTAIVSVLTGIPVRKDIAMTGEVTLRGRVLPIGGLKEKLLATLRGGIKKVLIPEENAKDLAEIPDNVKNNLEIVPVSRVGEVLKHALVRQPEPIEWTEQENPTAVPPVEDEAGASLAH.

Positions 22 to 215 (YAVLPLRDIV…KALSFMEAEI (194 aa)) constitute a Lon N-terminal domain. ATP is bound at residue 367–374 (GPPGVGKT). A Lon proteolytic domain is found at 602–783 (EDQVGVVTGL…GEVLKHALVR (182 aa)). Catalysis depends on residues S689 and K732. The interval 787-812 (PIEWTEQENPTAVPPVEDEAGASLAH) is disordered.

The protein belongs to the peptidase S16 family. In terms of assembly, homohexamer. Organized in a ring with a central cavity.

It is found in the cytoplasm. The catalysed reaction is Hydrolysis of proteins in presence of ATP.. Its function is as follows. ATP-dependent serine protease that mediates the selective degradation of mutant and abnormal proteins as well as certain short-lived regulatory proteins. Required for cellular homeostasis and for survival from DNA damage and developmental changes induced by stress. Degrades polypeptides processively to yield small peptide fragments that are 5 to 10 amino acids long. Binds to DNA in a double-stranded, site-specific manner. Required for wild-type virulence during the initial stages of infection in the mouse model, but not essential for the establishment and maintenance of chronic infection in this host. This chain is Lon protease, found in Brucella abortus (strain 2308).